The sequence spans 236 residues: Purine nucleoside phosphorylase DeoD-type (236 aa).

His-5 lines the a purine D-ribonucleoside pocket. Phosphate-binding positions include Gly-21, Arg-25, Arg-44, and 88-91 (RIGS). A purine D-ribonucleoside contacts are provided by residues 180 to 182 (EME) and 204 to 205 (SD). Catalysis depends on Asp-205, which acts as the Proton donor.

This sequence belongs to the PNP/UDP phosphorylase family. Homohexamer; trimer of homodimers.

It carries out the reaction a purine D-ribonucleoside + phosphate = a purine nucleobase + alpha-D-ribose 1-phosphate. The enzyme catalyses a purine 2'-deoxy-D-ribonucleoside + phosphate = a purine nucleobase + 2-deoxy-alpha-D-ribose 1-phosphate. Catalyzes the reversible phosphorolytic breakdown of the N-glycosidic bond in the beta-(deoxy)ribonucleoside molecules, with the formation of the corresponding free purine bases and pentose-1-phosphate. In Chromobacterium violaceum (strain ATCC 12472 / DSM 30191 / JCM 1249 / CCUG 213 / NBRC 12614 / NCIMB 9131 / NCTC 9757 / MK), this protein is Purine nucleoside phosphorylase DeoD-type.